Reading from the N-terminus, the 352-residue chain is MDYQVSSPTYDIDYYTSEPCQKVNVKQIAARLLPPLYSLVFIFGFVGNILVVLILINCKRLKSMTDIYLLNLAISDLFFLLTVPFWAHYAAARWDFGNTMCQLLTGLYFIGFFSGIFFIILLTIDRYLAIVHAVFALKARTVTFGVVTSVITWVVAVFASLPGIIFTRSQREGLHYTCSSHFPYSQYQFWKNFQTLKIVILGLVLPLLVMVICYSGILKTLLRCRNEKKRHRAVRLIFTIMIVYFLFWAPYNIVLLLNTFQEFFGLNNCSSSNRLDQAMQVTETLGMTHCCINPIIYAFVGEKFRNYLLVFFQKHIAKRFCKCCSIFQQEAPERASSVYTRSTGEQEISVGL.

The Extracellular segment spans residues 1–30; that stretch reads MDYQVSSPTYDIDYYTSEPCQKVNVKQIAA. Tyr3 carries the sulfotyrosine modification. 2 O-linked (GalNAc...) serine glycosylation sites follow: Ser6 and Ser7. Tyr10, Tyr14, and Tyr15 each carry sulfotyrosine. Intrachain disulfides connect Cys20/Cys269 and Cys101/Cys178. Residues 31–58 traverse the membrane as a helical segment; it reads RLLPPLYSLVFIFGFVGNILVVLILINC. At 59-68 the chain is on the cytoplasmic side; sequence KRLKSMTDIY. Residues 69-89 traverse the membrane as a helical segment; it reads LLNLAISDLFFLLTVPFWAHY. Residues 90–102 lie on the Extracellular side of the membrane; the sequence is AAARWDFGNTMCQ. The helical transmembrane segment at 103–124 threads the bilayer; the sequence is LLTGLYFIGFFSGIFFIILLTI. Residues 125–141 are Cytoplasmic-facing; sequence DRYLAIVHAVFALKART. A helical membrane pass occupies residues 142–166; it reads VTFGVVTSVITWVVAVFASLPGIIF. The Extracellular segment spans residues 167–198; that stretch reads TRSQREGLHYTCSSHFPYSQYQFWKNFQTLKI. Residues 199 to 218 form a helical membrane-spanning segment; that stretch reads VILGLVLPLLVMVICYSGIL. The Cytoplasmic segment spans residues 219 to 235; the sequence is KTLLRCRNEKKRHRAVR. The helical transmembrane segment at 236-260 threads the bilayer; that stretch reads LIFTIMIVYFLFWAPYNIVLLLNTF. Residues 261-277 lie on the Extracellular side of the membrane; that stretch reads QEFFGLNNCSSSNRLDQ. A helical transmembrane segment spans residues 278–301; that stretch reads AMQVTETLGMTHCCINPIIYAFVG. Residues 302 to 352 lie on the Cytoplasmic side of the membrane; that stretch reads EKFRNYLLVFFQKHIAKRFCKCCSIFQQEAPERASSVYTRSTGEQEISVGL. 3 S-palmitoyl cysteine lipidation sites follow: Cys321, Cys323, and Cys324. Ser336, Ser337, Ser342, and Ser349 each carry phosphoserine; by BARK1.

Belongs to the G-protein coupled receptor 1 family. Interacts with PRAF2. Efficient ligand binding to CCL3/MIP-1alpha and CCL4/MIP-1beta requires sulfation, O-glycosylation and sialic acid modifications. Glycosylation on Ser-6 is required for efficient binding of CCL4. Interacts with GRK2. Interacts with ARRB1 and ARRB2. Interacts with CNIH4. Interacts with S100A4; this interaction stimulates T-lymphocyte chemotaxis. Sulfated on at least 2 of the N-terminal tyrosines. Sulfation is required for efficient binding of the chemokines, CCL3 and CCL4. Post-translationally, palmitoylation in the C-terminal is important for cell surface expression. In terms of processing, phosphorylation on serine residues in the C-terminal is stimulated by binding CC chemokines especially by APO-RANTES. O-glycosylated, but not N-glycosylated. Ser-6 appears to be the major site even if Ser-7 may be also O-glycosylated. Also sialylated glycans present which contribute to chemokine binding. Thr-16 and Ser-17 may also be glycosylated and, if so, with small moieties such as a T-antigen.

The protein localises to the cell membrane. Functionally, receptor for a number of inflammatory CC-chemokines including CCL3/MIP-1-alpha, CCL4/MIP-1-beta and RANTES and subsequently transduces a signal by increasing the intracellular calcium ion level. May play a role in the control of granulocytic lineage proliferation or differentiation. Participates in T-lymphocyte migration to the infection site by acting as a chemotactic receptor. This is C-C chemokine receptor type 5 (CCR5) from Nasalis larvatus (Proboscis monkey).